Here is a 544-residue protein sequence, read N- to C-terminus: MNQSRRILRTVYLSLFLIGLFMLINDIFSSNILSSKSSDKEVQFDLNKSFDDNEISSVKSNSFNLINKSQDIVVETGIYVATFSTFKGNLVSLKLKNHLNLEKNPTDLINIDRKNETFFDISFDYFVDDLFLYKKIDDFNHEFKAYFKNNGKTYEYVKKYTFSKKDEYLMKFKVTVNGLEDYNLFDFDSYKIIFSSEIERLSDKAKLQYNNYLSQIIYYDNKLKYGKDGLRINNPRWIGSSTKYFGVLVSKENMEVEFKKERGTLKSFIINNVRNKKNISDEFFIYAGPKDNRYLDVFDKRDDNTFGLFDIFFGMSVEKSFWYLIQVPMQMVMQVFYDVIPNWGLSIIFLTIVVRILIFPLTFKGFRATAELSKLQPKMKELQAKFKHDPKKLNEEMGRLYKEEGVNPLGGCLPVILQLPIFFALYSLVNNLFLLRGASFIPGWIDDLSIGDSVYHFGYKLYFVSWTDIRILPFIMMFTQLGSTIVSSNMDLKNLGAQQKFLYFGMPIMFFFILYNMPSGLLIYWITTNIFTILQQYYIKMHLS.

A run of 5 helical transmembrane segments spans residues 13–33 (LSLF…SNIL), 343–363 (WGLS…PLTF), 409–429 (LGGC…YSLV), 461–481 (LYFV…FTQL), and 506–526 (MPIM…IYWI).

This sequence belongs to the OXA1/ALB3/YidC family. Type 1 subfamily. As to quaternary structure, interacts with the Sec translocase complex via SecD. Specifically interacts with transmembrane segments of nascent integral membrane proteins during membrane integration.

The protein resides in the cell inner membrane. Required for the insertion and/or proper folding and/or complex formation of integral membrane proteins into the membrane. Involved in integration of membrane proteins that insert both dependently and independently of the Sec translocase complex, as well as at least some lipoproteins. Aids folding of multispanning membrane proteins. The chain is Membrane protein insertase YidC from Borreliella burgdorferi (strain ZS7) (Borrelia burgdorferi).